The following is an 874-amino-acid chain: Probable inorganic carbon transporter subunit DabA (874 aa).

Residues Cys398, Asp400, His580, and Cys595 each contribute to the Zn(2+) site.

This sequence belongs to the inorganic carbon transporter (TC 9.A.2) DabA family. Forms a complex with DabB. Requires Zn(2+) as cofactor.

It is found in the cell membrane. Functionally, part of an energy-coupled inorganic carbon pump. In Bacillus cereus (strain AH187), this protein is Probable inorganic carbon transporter subunit DabA.